Reading from the N-terminus, the 306-residue chain is Uricase (306 aa).

Residues K5 and T65 each act as charge relay system in the active site. Positions 65, 66, 175, 192, 240, 241, and 267 each coordinate urate. A disordered region spans residues 281–306; that stretch reads AKVLREPPRPTGYQQFSMDRSDLEEQ.

This sequence belongs to the uricase family.

It catalyses the reaction urate + O2 + H2O = 5-hydroxyisourate + H2O2. The protein operates within purine metabolism; urate degradation; (S)-allantoin from urate: step 1/3. In terms of biological role, catalyzes the oxidation of uric acid to 5-hydroxyisourate, which is further processed to form (S)-allantoin. The sequence is that of Uricase from Halalkalicoccus jeotgali (strain DSM 18796 / CECT 7217 / JCM 14584 / KCTC 4019 / B3).